The following is a 348-amino-acid chain: D-alanine--D-alanine ligase (348 aa).

In terms of domain architecture, ATP-grasp spans 132 to 334 (KRILEVAGVP…YSDIIKELVV (203 aa)). 162-217 (LEKLTFPVFVKPANMGSSVGISKAENESELRSAIDLALKYDSRILIEQGVVAREIE) provides a ligand contact to ATP. Residues Asp288, Glu301, and Asn303 each contribute to the Mg(2+) site.

The protein belongs to the D-alanine--D-alanine ligase family. Requires Mg(2+) as cofactor. It depends on Mn(2+) as a cofactor.

Its subcellular location is the cytoplasm. It catalyses the reaction 2 D-alanine + ATP = D-alanyl-D-alanine + ADP + phosphate + H(+). The protein operates within cell wall biogenesis; peptidoglycan biosynthesis. Cell wall formation. This chain is D-alanine--D-alanine ligase, found in Streptococcus thermophilus (strain CNRZ 1066).